The primary structure comprises 172 residues: Regulator of hemoglobinization and erythroid cell expansion protein (172 aa).

Residues 9 to 29 (WHGLVIAVVSLFLQACFLTAI) form a helical membrane-spanning segment. The disordered stretch occupies residues 52–106 (VPRPSPGHHHPPAVKEMKETQTERDIPMSDSLYRHDSDTPSDSLDSSCSSPPACQ). Basic and acidic residues predominate over residues 64–89 (AVKEMKETQTERDIPMSDSLYRHDSD). Positions 91–103 (PSDSLDSSCSSPP) are enriched in low complexity. Residues Y132 and Y141 each carry the phosphotyrosine modification.

Interacts with EPOR; this interaction occurs in a erythropoietin (EPO)-dependent manner. Interacts with JAK2; this interaction occurs in a erythropoietin (EPO)-dependent manner. Interacts (via tyrosine-phosphorylated form) with GRB2. In terms of processing, phosphorylated. Phosphorylation on Tyr-132 and Tyr-141 occurs in a erythropoietin (EPO)-dependent manner. Expressed in the proerythroblasts (at protein level). Expressed strongly in the kidney. Expressed weakly in the pancreas, liver and lung. Expressed strongly in erythroid progenitor cells (EPCs). Expressed weakly in T-cells and neutrophils.

It is found in the cell membrane. In terms of biological role, acts as a signaling transduction factor of the EPO-EPOR signaling pathway promoting erythroid cell differentiation. The sequence is that of Regulator of hemoglobinization and erythroid cell expansion protein from Homo sapiens (Human).